A 566-amino-acid polypeptide reads, in one-letter code: Ubiquitin carboxyl-terminal hydrolase 21 (566 aa).

Basic and acidic residues-rich tracts occupy residues 1 to 14 (MPQASEHRLGRTRE) and 58 to 70 (PPDERLKKLELGR). Disordered stretches follow at residues 1–103 (MPQA…LPLP) and 146–169 (PEPPTLRRSTSLRRLGGFPGPPTL). Composition is skewed to low complexity over residues 71–81 (GRTSGSRPRGP) and 151–160 (LRRSTSLRRL). The Nuclear export signal motif lies at 134–152 (ELGAALSRLALRPEPPTLR). In terms of domain architecture, USP spans 212 to 559 (VGLRNLGNTC…EGYVLFYQLM (348 aa)). Cysteine 221 acts as the Nucleophile in catalysis. Residues 324 to 349 (APPILASGPVPSPPRRGGGALHEEPE) form a disordered region. 4 residues coordinate Zn(2+): cysteine 385, cysteine 388, cysteine 438, and cysteine 441. Residue histidine 519 is the Proton acceptor of the active site.

This sequence belongs to the peptidase C19 family. USP21 subfamily. As to quaternary structure, interacts with BEND3.

It is found in the cytoplasm. It localises to the nucleus. It carries out the reaction Thiol-dependent hydrolysis of ester, thioester, amide, peptide and isopeptide bonds formed by the C-terminal Gly of ubiquitin (a 76-residue protein attached to proteins as an intracellular targeting signal).. In terms of biological role, deubiquitinates histone H2A, a specific tag for epigenetic transcriptional repression, thereby acting as a coactivator. Deubiquitination of histone H2A releaves the repression of di- and trimethylation of histone H3 at 'Lys-4', resulting in regulation of transcriptional initiation. Regulates gene expression via histone H2A deubiquitination. Deubiquitinates BAZ2A/TIP5 leading to its stabilization. Also capable of removing NEDD8 from NEDD8 conjugates but has no effect on Sentrin-1 conjugates. Also acts as a negative regulator of the ribosome quality control (RQC) by mediating deubiquitination of 40S ribosomal proteins RPS10/eS10 and RPS20/uS10, thereby antagonizing ZNF598-mediated 40S ubiquitination. This is Ubiquitin carboxyl-terminal hydrolase 21 from Mus musculus (Mouse).